The following is a 193-amino-acid chain: Potassium-transporting ATPase KdpC subunit (193 aa).

The helical transmembrane segment at 7–27 threads the bilayer; the sequence is PMIVIFAVLAALTGLAYPAVM.

It belongs to the KdpC family. In terms of assembly, the system is composed of three essential subunits: KdpA, KdpB and KdpC.

The protein resides in the cell inner membrane. Functionally, part of the high-affinity ATP-driven potassium transport (or Kdp) system, which catalyzes the hydrolysis of ATP coupled with the electrogenic transport of potassium into the cytoplasm. This subunit acts as a catalytic chaperone that increases the ATP-binding affinity of the ATP-hydrolyzing subunit KdpB by the formation of a transient KdpB/KdpC/ATP ternary complex. In Paraburkholderia phymatum (strain DSM 17167 / CIP 108236 / LMG 21445 / STM815) (Burkholderia phymatum), this protein is Potassium-transporting ATPase KdpC subunit.